The primary structure comprises 250 residues: Functional amyloid subunit FapC (250 aa).

The signal sequence occupies residues 1–24; that stretch reads MKPTMALKPLVFALAALMAVAAQA. Residues 62–95 form a FapC_R1 repeat; that stretch reads NNAGANGSLSNSKGNLGANIAAGSGNQQDNAAAI. A linker 1 region spans residues 96–126; that stretch reads TSSAGDAATVFAVADIYQESKDNKFTNKGTQ. A FapC_R2 repeat occupies 127–160; that stretch reads NNALLNNSANNSSGNVGVNVAAGQGNQQKNNLAI. Residues 161–199 are linker 2; it reads VTADGKNVAAASNTEQVSLDNHFLNEASSKHSYKPQYVV. Residues 200-233 form a FapC_R3 repeat; sequence NNAGLLNSANNASGNIGVNVAAGAGNQQSNTLTL. The short motif at 237 to 240 is the Cys-X-X-Cys element; it reads CTVC.

Belongs to the FapB/FapC family. In terms of assembly, the major component of purified amyloid fibrils. Forms fibrils in vitro; in the presence of FapA the fibrils are about 50% wider. Interacts with FapA. Fibrillates in vitro; this is inhibited by FapA. Fibrils are resistant to boiling in 2% (weight/vol) SDS and require &gt;90% (vol/vol) formic acid to dissolve.

It localises to the fimbrium. The protein resides in the secreted. Its function is as follows. The major functional amyloid subunit in this bacterium. Intrinsically disordered in its monomeric state. Upon overexpression of the endogenous six-gene locus (fapA-fapF) in situ, cells form large clumps during liquid growth, make large amounts of biofilm and produce amyloid fibrils. Expression of the 6 gene operon in E.coli strain BL21(DE3) induces flocculation and biofilm formation with copious extracellular fibrils. The sequence is that of Functional amyloid subunit FapC from Pseudomonas fluorescens.